A 199-amino-acid polypeptide reads, in one-letter code: Ribonuclease HII (199 aa).

One can recognise an RNase H type-2 domain in the interval 7–196; sequence PWVCGVDEAG…VRELMANEKD (190 aa). 3 residues coordinate a divalent metal cation: D13, E14, and D105.

This sequence belongs to the RNase HII family. The cofactor is Mn(2+). Mg(2+) serves as cofactor.

It localises to the cytoplasm. The catalysed reaction is Endonucleolytic cleavage to 5'-phosphomonoester.. Endonuclease that specifically degrades the RNA of RNA-DNA hybrids. This is Ribonuclease HII from Nitrosospira multiformis (strain ATCC 25196 / NCIMB 11849 / C 71).